The chain runs to 271 residues: 3-methyl-2-oxobutanoate hydroxymethyltransferase (271 aa).

Mg(2+) contacts are provided by aspartate 53 and aspartate 92. 3-methyl-2-oxobutanoate is bound by residues 53-54, aspartate 92, and lysine 120; that span reads DS. Mg(2+) is bound at residue glutamate 122. Glutamate 189 functions as the Proton acceptor in the catalytic mechanism.

It belongs to the PanB family. As to quaternary structure, homodecamer; pentamer of dimers. Requires Mg(2+) as cofactor.

The protein localises to the cytoplasm. The enzyme catalyses 3-methyl-2-oxobutanoate + (6R)-5,10-methylene-5,6,7,8-tetrahydrofolate + H2O = 2-dehydropantoate + (6S)-5,6,7,8-tetrahydrofolate. It functions in the pathway cofactor biosynthesis; (R)-pantothenate biosynthesis; (R)-pantoate from 3-methyl-2-oxobutanoate: step 1/2. Its function is as follows. Catalyzes the reversible reaction in which hydroxymethyl group from 5,10-methylenetetrahydrofolate is transferred onto alpha-ketoisovalerate to form ketopantoate. This chain is 3-methyl-2-oxobutanoate hydroxymethyltransferase, found in Paraburkholderia phytofirmans (strain DSM 17436 / LMG 22146 / PsJN) (Burkholderia phytofirmans).